Consider the following 397-residue polypeptide: uncharacterized protein (397 aa).

The next 9 helical transmembrane spans lie at 1–21 (MGAS…LMLV), 39–59 (VIQS…VVVF), 76–96 (EALS…FGVP), 103–123 (VLLF…FVGA), 124–144 (ALIE…LVMA), 194–214 (MMTP…LFAF), 219–239 (ALFG…FSLL), 255–275 (LVYL…KLML), and 301–321 (QSLT…FWSA).

The protein belongs to the TerC family.

It localises to the cell membrane. This is an uncharacterized protein from Mycobacterium bovis (strain ATCC BAA-935 / AF2122/97).